Reading from the N-terminus, the 122-residue chain is Large ribosomal subunit protein bL12 (122 aa).

This sequence belongs to the bacterial ribosomal protein bL12 family. As to quaternary structure, homodimer. Part of the ribosomal stalk of the 50S ribosomal subunit. Forms a multimeric L10(L12)X complex, where L10 forms an elongated spine to which 2 to 4 L12 dimers bind in a sequential fashion. Binds GTP-bound translation factors.

Its function is as follows. Forms part of the ribosomal stalk which helps the ribosome interact with GTP-bound translation factors. Is thus essential for accurate translation. The polypeptide is Large ribosomal subunit protein bL12 (Mycoplasma capricolum subsp. capricolum (strain California kid / ATCC 27343 / NCTC 10154)).